A 172-amino-acid polypeptide reads, in one-letter code: NADH-quinone oxidoreductase subunit B (172 aa).

The [4Fe-4S] cluster site is built by C46, C47, C111, and C141.

It belongs to the complex I 20 kDa subunit family. NDH-1 is composed of 14 different subunits. Subunits NuoB, C, D, E, F, and G constitute the peripheral sector of the complex. It depends on [4Fe-4S] cluster as a cofactor.

It localises to the cell membrane. It carries out the reaction a quinone + NADH + 5 H(+)(in) = a quinol + NAD(+) + 4 H(+)(out). In terms of biological role, NDH-1 shuttles electrons from NADH, via FMN and iron-sulfur (Fe-S) centers, to quinones in the respiratory chain. The immediate electron acceptor for the enzyme in this species is believed to be a menaquinone. Couples the redox reaction to proton translocation (for every two electrons transferred, four hydrogen ions are translocated across the cytoplasmic membrane), and thus conserves the redox energy in a proton gradient. This Bacillus cereus (strain G9842) protein is NADH-quinone oxidoreductase subunit B.